A 289-amino-acid polypeptide reads, in one-letter code: Fumagillin beta-trans-bergamotene synthase af520 (289 aa).

The next 6 helical transmembrane spans lie at 35-55 (AVAL…GFLW), 95-115 (TLLY…TNTI), 142-162 (LIGA…FDGG), 165-185 (LHGL…TTGH), 222-242 (AWTI…LAYV), and 262-282 (YVSY…PIFP).

It belongs to the paxB family.

The protein localises to the membrane. It catalyses the reaction (2E,6E)-farnesyl diphosphate = (+)-exo-beta-bergamotene + diphosphate. It participates in secondary metabolite biosynthesis; terpenoid biosynthesis. Its function is as follows. Beta-trans-bergamotene synthase; part of the gene cluster that mediates the biosynthesis of fumagillin, a meroterpenoid that has numerous biological activities including irreversible inhibition of human type 2 methionine aminopeptidase (METAP2). Within the pathway, the membrane-bound fumagillin beta-trans-bergamotene synthase af520 converts farnesyl pyrophosphate (FPP) to beta-trans-bergamotene. The pathway begins with the conversion of FPP to beta-trans-bergamotene by af520. The multifunctional cytochrome P450 monooxygenase af510 then converts beta-trans-bergamotene into 5-keto-demethoxyfumagillol via several oxydation steps. 5-keto-demethoxyfumagillol is then subjected to successive C-6 hydroxylation and O-methylation by the dioxygenase af480 and O-methyltransferase af390-400, respectively, to yield 5-keto-fumagillol, which is then stereoselectively reduced by the keto-reductase af490 to 5R-hydroxy-seco-sesquiterpene. The next step is the polyketide transferase af380-catalyzed transfer of a dodecapentaenoyl group synthesized by the polyketide synthase af370 onto 5R-hydroxy-seco-sesquiterpene which leads to the production of prefumagillin. Finally, oxidative cleavage by the monooxygenase af470 converts prefumagillin to fumagillin. This is Fumagillin beta-trans-bergamotene synthase af520 from Aspergillus fumigatus (strain ATCC MYA-4609 / CBS 101355 / FGSC A1100 / Af293) (Neosartorya fumigata).